A 186-amino-acid chain; its full sequence is Peptidyl-tRNA hydrolase (186 aa).

Tyr14 is a binding site for tRNA. Residue His19 is the Proton acceptor of the active site. Residues Tyr64, Asn66, and Asn112 each coordinate tRNA.

Belongs to the PTH family. In terms of assembly, monomer.

The protein localises to the cytoplasm. The enzyme catalyses an N-acyl-L-alpha-aminoacyl-tRNA + H2O = an N-acyl-L-amino acid + a tRNA + H(+). Functionally, hydrolyzes ribosome-free peptidyl-tRNAs (with 1 or more amino acids incorporated), which drop off the ribosome during protein synthesis, or as a result of ribosome stalling. Its function is as follows. Catalyzes the release of premature peptidyl moieties from peptidyl-tRNA molecules trapped in stalled 50S ribosomal subunits, and thus maintains levels of free tRNAs and 50S ribosomes. The polypeptide is Peptidyl-tRNA hydrolase (Geobacillus thermodenitrificans (strain NG80-2)).